A 79-amino-acid chain; its full sequence is Cytochrome c oxidase assembly factor 6 homolog (79 aa).

One can recognise a CHCH domain in the interval 9-52; sequence RQACWGARDLYWRCLDDNAEDAARCQKLRSSFEASCPQQWIKYF. Residues 12-22 carry the Cx9C motif motif; the sequence is CWGARDLYWRC. 2 disulfide bridges follow: Cys-12–Cys-44 and Cys-22–Cys-33. The Cx10C motif motif lies at 33-44; it reads CQKLRSSFEASC.

It belongs to the cytochrome c oxidase subunit 6B family. Found in a complex with TMEM177, COX20, MT-CO2/COX2, COX18, SCO1 and SCO2. Interacts with COA1, MT-CO2/COX2, SCO1, SCO2 and COX20. Interacts with COX20 in a MT-CO2/COX2- and COX18-dependent manner. Interacts with COX16.

The protein resides in the mitochondrion. Its subcellular location is the mitochondrion intermembrane space. Functionally, involved in the maturation of the mitochondrial respiratory chain complex IV subunit MT-CO2/COX2. Thereby, may regulate early steps of complex IV assembly. Mitochondrial respiratory chain complex IV or cytochrome c oxidase is the component of the respiratory chain that catalyzes the transfer of electrons from intermembrane space cytochrome c to molecular oxygen in the matrix and as a consequence contributes to the proton gradient involved in mitochondrial ATP synthesis. May also be required for efficient formation of respiratory supercomplexes comprised of complexes III and IV. This is Cytochrome c oxidase assembly factor 6 homolog (Coa6) from Mus musculus (Mouse).